The chain runs to 401 residues: MDYSHKYIKYKKKYLSLRNKLDRENTPVIISRIEDNFSIDDKITQSNNNFTNNVFYNFDTSANIFSPMSLTFSLALLQLAAGSETDKSLTKFLGYKYSLDDINYLFNIMNSSIMKLSNLLVVNNKYSINQEYRSMLNGIAVIVQDDFITNKKLISQKVNEFVESETNAMIKNVINDSDIDNKSVFIMVNTIYFKANWKHKFPVDNTTKMRFHRTQEDVVDMMYQVNSFNYYENKALQLIELPYNDEDYVMGIILPKVYNTDNVDYTINNVPMFSPAEINEFINNCQYSKVELYVPKFTQRKRYEFVPILKKMGLTHLFNKNDTDLNIMAKDAYISRIIHEAVVVIDEIGTEAAATTIVIGQAMATRPVKQKIKVFKADHAFIYYIRHQPTGLFLFFGDYQG.

This sequence belongs to the serpin family.

May act as an inhibitor for a host chymotrypsin-like protease. This is an uncharacterized protein from Acanthamoeba polyphaga mimivirus (APMV).